We begin with the raw amino-acid sequence, 213 residues long: Superoxide dismutase [Fe] (213 aa).

Fe cation is bound by residues His28, His82, Asp164, and His168.

It belongs to the iron/manganese superoxide dismutase family. Homotetramer. It depends on Fe cation as a cofactor.

It carries out the reaction 2 superoxide + 2 H(+) = H2O2 + O2. Destroys superoxide anion radicals which are normally produced within the cells and which are toxic to biological systems. This Aquifex aeolicus (strain VF5) protein is Superoxide dismutase [Fe] (sodB).